We begin with the raw amino-acid sequence, 203 residues long: MYRLLCLLALLTAAGLMGCASQRGLTPPPDLQAHQQQLQAVASWQIDGKLGIRSPQESGSATLKWQQQPDNYQIYLSGPLGQKRLQIIGAPAAVTLLQSGQPPMHAQSAESLIKKAAGWTLPVSQLSYWVRGLPAPKTPITGLQLSPQGLISELQQANWTIHYSNYRDYYHGETRLALPGKIQAEYRDLRLTLVIRDWQLGIH.

Positions 1–18 (MYRLLCLLALLTAAGLMG) are cleaved as a signal peptide. The N-palmitoyl cysteine moiety is linked to residue Cys19. Residue Cys19 is the site of S-diacylglycerol cysteine attachment.

Belongs to the LolB family. Monomer.

It localises to the cell outer membrane. Plays a critical role in the incorporation of lipoproteins in the outer membrane after they are released by the LolA protein. This is Outer-membrane lipoprotein LolB from Cellvibrio japonicus (strain Ueda107) (Pseudomonas fluorescens subsp. cellulosa).